Here is a 284-residue protein sequence, read N- to C-terminus: Tropomyosin (284 aa).

Residues 1-284 (MDSIKKKMMA…DTTFAELTSF (284 aa)) are a coiled coil. The interval 97-140 (EDFEQSSGRLTETSTKLDDASKAAEESERNRKTLETRSISDDER) is disordered. The segment covering 101 to 110 (QSSGRLTETS) has biased composition (polar residues). Residues 111-140 (TKLDDASKAAEESERNRKTLETRSISDDER) show a composition bias toward basic and acidic residues.

It belongs to the tropomyosin family. In terms of assembly, homodimer.

Its function is as follows. Tropomyosin, in association with the troponin complex, plays a central role in the calcium dependent regulation of muscle contraction. The chain is Tropomyosin from Echinococcus multilocularis (Fox tapeworm).